The chain runs to 394 residues: 1-deoxy-D-xylulose 5-phosphate reductoisomerase (394 aa).

8 residues coordinate NADPH: T10, G11, S12, I13, G38, R39, N40, and N123. K124 contributes to the 1-deoxy-D-xylulose 5-phosphate binding site. Position 125 (E125) interacts with NADPH. Residue D149 coordinates Mn(2+). Residues S150, E151, S175, and H198 each contribute to the 1-deoxy-D-xylulose 5-phosphate site. E151 provides a ligand contact to Mn(2+). G204 serves as a coordination point for NADPH. Residues S211, N216, K217, and E220 each coordinate 1-deoxy-D-xylulose 5-phosphate. E220 is a Mn(2+) binding site.

It belongs to the DXR family. Mg(2+) is required as a cofactor. Requires Mn(2+) as cofactor.

The enzyme catalyses 2-C-methyl-D-erythritol 4-phosphate + NADP(+) = 1-deoxy-D-xylulose 5-phosphate + NADPH + H(+). Its pathway is isoprenoid biosynthesis; isopentenyl diphosphate biosynthesis via DXP pathway; isopentenyl diphosphate from 1-deoxy-D-xylulose 5-phosphate: step 1/6. Catalyzes the NADPH-dependent rearrangement and reduction of 1-deoxy-D-xylulose-5-phosphate (DXP) to 2-C-methyl-D-erythritol 4-phosphate (MEP). This chain is 1-deoxy-D-xylulose 5-phosphate reductoisomerase, found in Cereibacter sphaeroides (strain ATCC 17025 / ATH 2.4.3) (Rhodobacter sphaeroides).